Here is a 735-residue protein sequence, read N- to C-terminus: Catalase-peroxidase (735 aa).

The segment at residues 97 to 220 (WHAAGTYRIG…LAAVQMGLIY (124 aa)) is a cross-link (tryptophyl-tyrosyl-methioninium (Trp-Tyr) (with M-246)). Residue His-98 is the Proton acceptor of the active site. Residues 220–246 (YVNPEGPNGKPDPMAAAHDIRETFGRM) constitute a cross-link (tryptophyl-tyrosyl-methioninium (Tyr-Met) (with W-97)). His-261 lines the heme b pocket. The interval 342–362 (AHQWTPKNPEAASTVPDAHDP) is disordered.

The protein belongs to the peroxidase family. Peroxidase/catalase subfamily. In terms of assembly, homodimer or homotetramer. Heme b serves as cofactor. Post-translationally, formation of the three residue Trp-Tyr-Met cross-link is important for the catalase, but not the peroxidase activity of the enzyme.

The catalysed reaction is H2O2 + AH2 = A + 2 H2O. It carries out the reaction 2 H2O2 = O2 + 2 H2O. Functionally, bifunctional enzyme with both catalase and broad-spectrum peroxidase activity. This Gloeobacter violaceus (strain ATCC 29082 / PCC 7421) protein is Catalase-peroxidase.